Here is a 147-residue protein sequence, read N- to C-terminus: 3-dehydroquinate dehydratase (147 aa).

Residue Tyr-23 is the Proton acceptor of the active site. Residues Asn-74, His-80, and Asp-87 each coordinate substrate. His-100 acts as the Proton donor in catalysis. Substrate is bound by residues 101–102 and Arg-111; that span reads IS.

This sequence belongs to the type-II 3-dehydroquinase family. Homododecamer.

The enzyme catalyses 3-dehydroquinate = 3-dehydroshikimate + H2O. It participates in metabolic intermediate biosynthesis; chorismate biosynthesis; chorismate from D-erythrose 4-phosphate and phosphoenolpyruvate: step 3/7. In terms of biological role, catalyzes a trans-dehydration via an enolate intermediate. The chain is 3-dehydroquinate dehydratase from Bacillus pumilus (strain SAFR-032).